The chain runs to 623 residues: Protein EDS1 (623 aa).

At A2 the chain carries N-acetylalanine. S123 functions as the Nucleophile in the catalytic mechanism. Active-site charge relay system residues include D187 and H317. Positions V358–R383 form a coiled coil.

As to quaternary structure, homodimer. Interacts with RPS4, RPS6, SNC1, SRFR1, AvrRps4 and HopA1. Part of a nuclear complex made of EDS1, PAD4 and SAG101, that can be redirected to the cytoplasm in the presence of an extranuclear form of EDS1. Interacts (via N-terminus) with PAD4 (via N-terminus). Interacts (via N-terminus) with SAG101. EDS1-SAG101 and EDS1-PAD4 form separate complexes in pathogen-unchallenged cells. Part of a nuclear protein complex made of VICTR, PAD4 and EDS1. Interacts with VICTR.

Its subcellular location is the nucleus. It is found in the cytoplasm. The protein resides in the microsome. In terms of biological role, positive regulator of basal resistance and of effector-triggered immunity specifically mediated by TIR-NB-LRR (TNL) resistance proteins. Disruption by bacterial effector of EDS1-TIR-NB-LRR resistance protein interactions constitutes the first step in resistance activation. Acts redundantly with salicylic acid to regulate resistance gene-mediated signaling. Triggers early plant defenses and hypersensitive response independently of PAD4, and then recruits PAD4 to potentiate plant defenses through the accumulation of salicylic acid. Nuclear localization is essential for basal and TNL-conditioned immunity and for reprogramming defense gene expression, while cytoplasmic EDS1 is required to induce a complete immune response. Heterodimerization with PAD4 and/or SGA101 is necessary for TNL-mediated effector-triggered immunity. Contributes to nonhost resistance against E.amylovora. Loss of EDS1-PAD4 interaction compromises basal but not TNL-triggered resistance. Necessary for systemic acquired resistance (SAR) signal generation and perception. Has no direct lipase activity. Putative lipase activity is dispensable for immune functions. The chain is Protein EDS1 from Arabidopsis thaliana (Mouse-ear cress).